Reading from the N-terminus, the 717-residue chain is Glutamine--fructose-6-phosphate aminotransferase [isomerizing] (717 aa).

Residue C2 is the For GATase activity of the active site. Residues 2 to 318 (CGIFGYCNYL…DDDLAHIYDG (317 aa)) form the Glutamine amidotransferase type-2 domain. At S253 the chain carries Phosphoserine. T334 bears the Phosphothreonine mark. S336 is subject to Phosphoserine. SIS domains follow at residues 390-529 (WLPV…DRVS) and 562-707 (CATE…VDFP).

It catalyses the reaction D-fructose 6-phosphate + L-glutamine = D-glucosamine 6-phosphate + L-glutamate. It functions in the pathway nucleotide-sugar biosynthesis; UDP-N-acetyl-alpha-D-glucosamine biosynthesis; alpha-D-glucosamine 6-phosphate from D-fructose 6-phosphate: step 1/1. Its function is as follows. Involved in amino sugar synthesis (formation of chitin, supplies the amino sugars of asparagine-linked oligosaccharides of glycoproteins). The polypeptide is Glutamine--fructose-6-phosphate aminotransferase [isomerizing] (GFA1) (Saccharomyces cerevisiae (strain ATCC 204508 / S288c) (Baker's yeast)).